The primary structure comprises 510 residues: uncharacterized protein (510 aa).

This sequence belongs to the phage portal family. PBSX subfamily.

This is an uncharacterized protein from Bacillus subtilis (strain 168).